Here is a 338-residue protein sequence, read N- to C-terminus: Ketol-acid reductoisomerase (NADP(+)) (338 aa).

In terms of domain architecture, KARI N-terminal Rossmann spans 1–181 (MNVFYDKDAD…GGGRAGIIET (181 aa)). Residues 24-27 (YGSQ), R47, and S52 each bind NADP(+). H107 is a catalytic residue. G133 provides a ligand contact to NADP(+). One can recognise a KARI C-terminal knotted domain in the interval 182–327 (NFREETETDL…AKLRAMMPWI (146 aa)). Residues D190, E194, E226, and E230 each coordinate Mg(2+). S251 contributes to the substrate binding site.

The protein belongs to the ketol-acid reductoisomerase family. Requires Mg(2+) as cofactor.

The enzyme catalyses (2R)-2,3-dihydroxy-3-methylbutanoate + NADP(+) = (2S)-2-acetolactate + NADPH + H(+). It carries out the reaction (2R,3R)-2,3-dihydroxy-3-methylpentanoate + NADP(+) = (S)-2-ethyl-2-hydroxy-3-oxobutanoate + NADPH + H(+). The protein operates within amino-acid biosynthesis; L-isoleucine biosynthesis; L-isoleucine from 2-oxobutanoate: step 2/4. It participates in amino-acid biosynthesis; L-valine biosynthesis; L-valine from pyruvate: step 2/4. Functionally, involved in the biosynthesis of branched-chain amino acids (BCAA). Catalyzes an alkyl-migration followed by a ketol-acid reduction of (S)-2-acetolactate (S2AL) to yield (R)-2,3-dihydroxy-isovalerate. In the isomerase reaction, S2AL is rearranged via a Mg-dependent methyl migration to produce 3-hydroxy-3-methyl-2-ketobutyrate (HMKB). In the reductase reaction, this 2-ketoacid undergoes a metal-dependent reduction by NADPH to yield (R)-2,3-dihydroxy-isovalerate. The chain is Ketol-acid reductoisomerase (NADP(+)) from Burkholderia cenocepacia (strain HI2424).